The chain runs to 508 residues: Lysine--tRNA ligase (508 aa).

Mg(2+) contacts are provided by Glu418 and Glu425.

It belongs to the class-II aminoacyl-tRNA synthetase family. Homodimer. Requires Mg(2+) as cofactor.

It is found in the cytoplasm. The catalysed reaction is tRNA(Lys) + L-lysine + ATP = L-lysyl-tRNA(Lys) + AMP + diphosphate. The polypeptide is Lysine--tRNA ligase (Burkholderia multivorans (strain ATCC 17616 / 249)).